Reading from the N-terminus, the 317-residue chain is Ribonuclease H2 subunit A (317 aa).

Residues 43–270 form the RNase H type-2 domain; that stretch reads PCCLGVDEAG…AKDMLETKGG (228 aa). 3 residues coordinate a divalent metal cation: Asp-49, Glu-50, and Asp-166.

The protein belongs to the RNase HII family. Eukaryotic subfamily. The cofactor is Mn(2+). Requires Mg(2+) as cofactor.

The enzyme catalyses Endonucleolytic cleavage to 5'-phosphomonoester.. Endonuclease that specifically degrades the RNA of RNA-DNA hybrids. Participates in DNA replication. The polypeptide is Ribonuclease H2 subunit A (rnh-201) (Neurospora crassa (strain ATCC 24698 / 74-OR23-1A / CBS 708.71 / DSM 1257 / FGSC 987)).